The sequence spans 313 residues: Ribosomal RNA small subunit methyltransferase H (313 aa).

S-adenosyl-L-methionine contacts are provided by residues 33-35 (AGH), Asp-53, Phe-82, Asp-103, and Gln-110.

This sequence belongs to the methyltransferase superfamily. RsmH family.

It is found in the cytoplasm. It catalyses the reaction cytidine(1402) in 16S rRNA + S-adenosyl-L-methionine = N(4)-methylcytidine(1402) in 16S rRNA + S-adenosyl-L-homocysteine + H(+). Functionally, specifically methylates the N4 position of cytidine in position 1402 (C1402) of 16S rRNA. The sequence is that of Ribosomal RNA small subunit methyltransferase H from Acetivibrio thermocellus (strain ATCC 27405 / DSM 1237 / JCM 9322 / NBRC 103400 / NCIMB 10682 / NRRL B-4536 / VPI 7372) (Clostridium thermocellum).